Consider the following 366-residue polypeptide: Phospho-N-acetylmuramoyl-pentapeptide-transferase (366 aa).

A run of 10 helical transmembrane segments spans residues 3–23, 54–74, 80–100, 120–140, 161–181, 197–217, 238–258, 262–282, 288–308, and 341–361; these read QIFI…PVLI, GIAV…VGLV, PGVS…LGFA, LVGQ…FPNA, IAIG…YLVI, LASG…FWQF, LSML…WNAA, IFMG…LSVT, LMIL…IQVV, and FWLL…AEWL.

It belongs to the glycosyltransferase 4 family. MraY subfamily. Mg(2+) is required as a cofactor.

Its subcellular location is the cell membrane. The catalysed reaction is UDP-N-acetyl-alpha-D-muramoyl-L-alanyl-gamma-D-glutamyl-meso-2,6-diaminopimeloyl-D-alanyl-D-alanine + di-trans,octa-cis-undecaprenyl phosphate = di-trans,octa-cis-undecaprenyl diphospho-N-acetyl-alpha-D-muramoyl-L-alanyl-D-glutamyl-meso-2,6-diaminopimeloyl-D-alanyl-D-alanine + UMP. It functions in the pathway cell wall biogenesis; peptidoglycan biosynthesis. Its function is as follows. Catalyzes the initial step of the lipid cycle reactions in the biosynthesis of the cell wall peptidoglycan: transfers peptidoglycan precursor phospho-MurNAc-pentapeptide from UDP-MurNAc-pentapeptide onto the lipid carrier undecaprenyl phosphate, yielding undecaprenyl-pyrophosphoryl-MurNAc-pentapeptide, known as lipid I. The chain is Phospho-N-acetylmuramoyl-pentapeptide-transferase from Corynebacterium jeikeium (strain K411).